The following is a 126-amino-acid chain: Fluoride-specific ion channel FluC (126 aa).

4 helical membrane-spanning segments follow: residues 7-24 (LWVS…YFLS), 35-55 (FPWG…LFLV), 69-89 (LLIA…AYES), and 98-118 (WGLF…AVLG). Gly-77 and Thr-80 together coordinate Na(+).

This sequence belongs to the fluoride channel Fluc/FEX (TC 1.A.43) family.

The protein resides in the cell inner membrane. It catalyses the reaction fluoride(in) = fluoride(out). Na(+) is not transported, but it plays an essential structural role and its presence is essential for fluoride channel function. Fluoride-specific ion channel. Important for reducing fluoride concentration in the cell, thus reducing its toxicity. In Koribacter versatilis (strain Ellin345), this protein is Fluoride-specific ion channel FluC.